A 58-amino-acid polypeptide reads, in one-letter code: Weak neurotoxin D2B (58 aa).

Intrachain disulfides connect Cys3–Cys24, Cys17–Cys41, and Cys43–Cys54.

In terms of tissue distribution, expressed by the venom gland.

It is found in the secreted. In terms of biological role, binds to muscle nicotinic acetylcholine receptor (nAChR) and inhibit acetylcholine from binding to the receptor, thereby impairing neuromuscular transmission. The polypeptide is Weak neurotoxin D2B (Micrurus pyrrhocryptus (Coral snake)).